Here is a 916-residue protein sequence, read N- to C-terminus: Nonsense-mediated mRNA decay factor SMG8 (916 aa).

The segment at 566–626 (LENSNRTPDT…KNYASQGDAD (61 aa)) is disordered. Polar residues predominate over residues 589–604 (LSGSQKSQDSASNLTF).

This sequence belongs to the SMG8 family.

Involved in nonsense-mediated decay (NMD) of mRNAs containing premature stop codons. Probable component of kinase complex containing SMG1 and recruited to stalled ribosomes. This is Nonsense-mediated mRNA decay factor SMG8 from Aedes aegypti (Yellowfever mosquito).